The chain runs to 103 residues: MYAVIKTGGKQYKVAAGEKIKVEQIAADVGQEIVIDQVLAVGEGSSIKVGTPLVSGATVTVTVLSHGRHDKVRIFKMRRRKHYQKRQGHRQNFTELQIGAIVG.

This sequence belongs to the bacterial ribosomal protein bL21 family. In terms of assembly, part of the 50S ribosomal subunit. Contacts protein L20.

This protein binds to 23S rRNA in the presence of protein L20. The protein is Large ribosomal subunit protein bL21 of Polaromonas naphthalenivorans (strain CJ2).